A 334-amino-acid polypeptide reads, in one-letter code: Leucine-rich repeat-containing protein 39 (334 aa).

LRR repeat units lie at residues 59–82 (EDGR…LLKL), 83–105 (NQLQ…IGRF), 106–128 (QHLI…IGLL), 129–151 (TRLQ…LSNC), 153–175 (SLEK…LSKL), 176–198 (LKLT…VLDM), 199–221 (PALE…LDRM), 223–244 (SLHT…IRNM), 245–269 (KNLG…EMTS), and 272–295 (FVNF…VDGE).

In terms of assembly, interacts with MYH7 (via C-terminus). In terms of tissue distribution, expressed in heart and skeletal muscle (at protein level). Also detected in kidney (at protein level). Not detected in other tissues tested (at protein level).

The protein resides in the cytoplasm. It is found in the myofibril. It localises to the sarcomere. Its subcellular location is the m line. Its function is as follows. Component of the sarcomeric M-band which plays a role in myocyte response to biomechanical stress. May regulate expression of other M-band proteins via an SRF-dependent pathway. Important for normal contractile function in heart. This is Leucine-rich repeat-containing protein 39 from Rattus norvegicus (Rat).